We begin with the raw amino-acid sequence, 485 residues long: ATP synthase subunit beta (485 aa).

Residues 1–11 are compositionally biased toward basic and acidic residues; it reads MPATETADKNT. The disordered stretch occupies residues 1–20; the sequence is MPATETADKNTKSANSDTSG. Position 170-177 (170-177) interacts with ATP; the sequence is GGAGVGKT.

It belongs to the ATPase alpha/beta chains family. In terms of assembly, F-type ATPases have 2 components, CF(1) - the catalytic core - and CF(0) - the membrane proton channel. CF(1) has five subunits: alpha(3), beta(3), gamma(1), delta(1), epsilon(1). CF(0) has three main subunits: a(1), b(2) and c(9-12). The alpha and beta chains form an alternating ring which encloses part of the gamma chain. CF(1) is attached to CF(0) by a central stalk formed by the gamma and epsilon chains, while a peripheral stalk is formed by the delta and b chains.

It is found in the cell membrane. It carries out the reaction ATP + H2O + 4 H(+)(in) = ADP + phosphate + 5 H(+)(out). Functionally, produces ATP from ADP in the presence of a proton gradient across the membrane. The catalytic sites are hosted primarily by the beta subunits. The polypeptide is ATP synthase subunit beta (Mycobacterium avium (strain 104)).